A 243-amino-acid polypeptide reads, in one-letter code: Adenine phosphoribosyltransferase 1, chloroplastic (243 aa).

Residues 1–52 (MQTIIISPLVSHRLCLARAVPCNRLLNNHHRAPPSIRLSNHRSTTSLRLFSS) constitute a chloroplast transit peptide. Position 2 is an N-acetylalanine (glutamine 2).

It belongs to the purine/pyrimidine phosphoribosyltransferase family. In terms of assembly, homodimer.

The protein resides in the plastid. The protein localises to the chloroplast. It localises to the cytoplasm. The enzyme catalyses AMP + diphosphate = 5-phospho-alpha-D-ribose 1-diphosphate + adenine. It participates in purine metabolism; AMP biosynthesis via salvage pathway; AMP from adenine: step 1/1. Functionally, catalyzes a salvage reaction resulting in the formation of AMP, that is energically less costly than de novo synthesis. Contributes primarily to the recycling of adenine into adenylate nucleotides, but is also involved in the inactivation of cytokinins by phosphoribosylation. Catalyzes the conversion of cytokinins from free bases (active form) to the corresponding nucleotides (inactive form). The protein is Adenine phosphoribosyltransferase 1, chloroplastic (APT1) of Arabidopsis thaliana (Mouse-ear cress).